Here is a 176-residue protein sequence, read N- to C-terminus: Nicotinamide-nucleotide adenylyltransferase (176 aa).

The protein belongs to the archaeal NMN adenylyltransferase family.

The protein resides in the cytoplasm. It catalyses the reaction beta-nicotinamide D-ribonucleotide + ATP + H(+) = diphosphate + NAD(+). The protein operates within cofactor biosynthesis; NAD(+) biosynthesis; NAD(+) from nicotinamide D-ribonucleotide: step 1/1. In Halorubrum lacusprofundi (strain ATCC 49239 / DSM 5036 / JCM 8891 / ACAM 34), this protein is Nicotinamide-nucleotide adenylyltransferase.